Reading from the N-terminus, the 392-residue chain is Aryl-hydrocarbon-interacting protein-like 1 (392 aa).

Residues 53-145 (RQVDQPMHII…DLDELQKEPQ (93 aa)) enclose the PPIase FKBP-type domain. TPR repeat units follow at residues 178–211 (VPVL…LRNL), 230–263 (NTLT…HPGI), and 264–297 (VKAY…EPSM). Residues 329–392 (QGATQPPAEP…PLSPGHSLQH (64 aa)) are disordered. Pro residues-rich tracts occupy residues 335-346 (PAEPPAQPPTAP) and 355-366 (PADPPAEPPTAP).

As to quaternary structure, interacts with NUB1.

Its subcellular location is the cytoplasm. It localises to the nucleus. Functionally, may be important in protein trafficking and/or protein folding and stabilization. This Macaca mulatta (Rhesus macaque) protein is Aryl-hydrocarbon-interacting protein-like 1 (AIPL1).